Consider the following 874-residue polypeptide: DNA mismatch repair protein MutS (874 aa).

630–637 lines the ATP pocket; sequence GPNMAGKS.

The protein belongs to the DNA mismatch repair MutS family.

Its function is as follows. This protein is involved in the repair of mismatches in DNA. It is possible that it carries out the mismatch recognition step. This protein has a weak ATPase activity. The protein is DNA mismatch repair protein MutS of Chlorobium phaeovibrioides (strain DSM 265 / 1930) (Prosthecochloris vibrioformis (strain DSM 265)).